A 110-amino-acid polypeptide reads, in one-letter code: Integration host factor subunit alpha (110 aa).

Belongs to the bacterial histone-like protein family. Heterodimer of an alpha and a beta chain.

Its function is as follows. This protein is one of the two subunits of integration host factor, a specific DNA-binding protein that functions in genetic recombination as well as in transcriptional and translational control. The polypeptide is Integration host factor subunit alpha (Nitrobacter hamburgensis (strain DSM 10229 / NCIMB 13809 / X14)).